The chain runs to 379 residues: RIB43A-like with coiled-coils protein 1 (379 aa).

Residues 1–21 (MYNINQSTDTKEAAAIEARRN) are disordered. Residues 9 to 21 (DTKEAAAIEARRN) are compositionally biased toward basic and acidic residues. Coiled coils occupy residues 85–111 (ADRT…GREF), 161–241 (RYNL…KANL), and 280–304 (EQRA…QAEK).

The protein belongs to the RIB43A family. Microtubule inner protein component of sperm flagellar doublet microtubules.

The protein localises to the cytoplasm. The protein resides in the cytoskeleton. Its subcellular location is the flagellum axoneme. In Macaca fascicularis (Crab-eating macaque), this protein is RIB43A-like with coiled-coils protein 1 (RIBC1).